The chain runs to 281 residues: Protein synthesis inhibitor I (281 aa).

N-acetylalanine is present on alanine 2. Glutamate 175 is an active-site residue.

Belongs to the ribosome-inactivating protein family. Type 1 RIP subfamily.

It is found in the cytoplasm. The enzyme catalyses Endohydrolysis of the N-glycosidic bond at one specific adenosine on the 28S rRNA.. Inhibits the elongation phase of protein synthesis. It inactivates fungal ribosomes even more effectively than mammalian ribosomes and is thought to function as a constitutive antifungal agent in plants. This is Protein synthesis inhibitor I (RIP30) from Hordeum vulgare (Barley).